The following is a 500-amino-acid chain: Putative glucokinase-2 (500 aa).

Ser2 is modified (N-acetylserine). The residue at position 2 (Ser2) is a Phosphoserine. A Hexokinase domain is found at 12–498 (EALEDAVVEI…SGVGAALCAL (487 aa)). The tract at residues 74 to 217 (NGTERGVLLA…LSMINVVALT (144 aa)) is hexokinase small subdomain. Lys110 lines the ATP pocket. Residues 159-185 (KMGFTFSYPVDQTSLSSGTLIRWTKSF) are glucose-binding. The hexokinase large subdomain stretch occupies residues 218 to 487 (NDTVGTFLSH…RKIHLRLAKD (270 aa)). Ser470 carries the phosphoserine modification. Position 487-492 (487-492 (DGSGVG)) interacts with ATP.

This sequence belongs to the hexokinase family.

It is found in the cytoplasm. It carries out the reaction D-glucose + ATP = D-glucose 6-phosphate + ADP + H(+). It participates in carbohydrate degradation; glycolysis; D-glyceraldehyde 3-phosphate and glycerone phosphate from D-glucose: step 1/4. Its function is as follows. Putative glucokinase involved in phosphorylation of aldohexoses and glucose uptake. Involved in sporulation. Required for the full activation of the early meiotic inducer IME1. This Saccharomyces cerevisiae (strain ATCC 204508 / S288c) (Baker's yeast) protein is Putative glucokinase-2 (EMI2).